A 214-amino-acid chain; its full sequence is Thymidylate kinase (214 aa).

7–14 (GVDGAGKR) lines the ATP pocket. DTMP contacts are provided by aspartate 9, tyrosine 39, phenylalanine 70, arginine 74, arginine 95, asparagine 100, and tyrosine 103. Aspartate 9 is a binding site for Mg(2+). The segment at 147-159 (GERSRGRAQRDPG) is LID. Positions 163 and 165 each coordinate dTMP. Glutamate 166 contacts Mg(2+).

This sequence belongs to the thymidylate kinase family. In terms of assembly, homodimer. It depends on Mg(2+) as a cofactor.

The catalysed reaction is dTMP + ATP = dTDP + ADP. Its pathway is pyrimidine metabolism; dTTP biosynthesis. Functionally, catalyzes the reversible phosphorylation of deoxythymidine monophosphate (dTMP) to deoxythymidine diphosphate (dTDP), using ATP as its preferred phosphoryl donor. Situated at the junction of both de novo and salvage pathways of deoxythymidine triphosphate (dTTP) synthesis, is essential for DNA synthesis and cellular growth. This is Thymidylate kinase (tmk) from Mycobacterium tuberculosis (strain CDC 1551 / Oshkosh).